Reading from the N-terminus, the 412-residue chain is UPF0754 membrane protein Synpcc7942_1098 (412 aa).

2 helical membrane-spanning segments follow: residues 8–28 (LWLL…DLAI) and 390–410 (IGGV…VWSL).

It belongs to the UPF0754 family.

It is found in the cell inner membrane. In Synechococcus elongatus (strain ATCC 33912 / PCC 7942 / FACHB-805) (Anacystis nidulans R2), this protein is UPF0754 membrane protein Synpcc7942_1098.